A 650-amino-acid chain; its full sequence is Chaperone protein DnaK (650 aa).

A Phosphothreonine; by autocatalysis modification is found at Thr200.

This sequence belongs to the heat shock protein 70 family.

Its function is as follows. Acts as a chaperone. The chain is Chaperone protein DnaK from Burkholderia orbicola (strain MC0-3).